The following is a 581-amino-acid chain: Proline--tRNA ligase (581 aa).

The protein belongs to the class-II aminoacyl-tRNA synthetase family. ProS type 1 subfamily. Homodimer.

It is found in the cytoplasm. The enzyme catalyses tRNA(Pro) + L-proline + ATP = L-prolyl-tRNA(Pro) + AMP + diphosphate. Its function is as follows. Catalyzes the attachment of proline to tRNA(Pro) in a two-step reaction: proline is first activated by ATP to form Pro-AMP and then transferred to the acceptor end of tRNA(Pro). As ProRS can inadvertently accommodate and process non-cognate amino acids such as alanine and cysteine, to avoid such errors it has two additional distinct editing activities against alanine. One activity is designated as 'pretransfer' editing and involves the tRNA(Pro)-independent hydrolysis of activated Ala-AMP. The other activity is designated 'posttransfer' editing and involves deacylation of mischarged Ala-tRNA(Pro). The misacylated Cys-tRNA(Pro) is not edited by ProRS. This Acidovorax ebreus (strain TPSY) (Diaphorobacter sp. (strain TPSY)) protein is Proline--tRNA ligase.